The chain runs to 30 residues: Phospholipase A2 acanmyotoxin-2 (30 aa).

The Ca(2+) site is built by Y28 and G30.

It depends on Ca(2+) as a cofactor. In terms of processing, contains seven disulfide bonds. As to expression, expressed by the venom gland.

It localises to the secreted. It carries out the reaction a 1,2-diacyl-sn-glycero-3-phosphocholine + H2O = a 1-acyl-sn-glycero-3-phosphocholine + a fatty acid + H(+). In terms of biological role, snake venom phospholipase A2 (PLA2) that has myotoxic activity but no significant neurotoxicity. PLA2 catalyzes the calcium-dependent hydrolysis of the 2-acyl groups in 3-sn-phosphoglycerides. This Acanthophis sp. (strain Seram) (Seram death adder) protein is Phospholipase A2 acanmyotoxin-2.